The primary structure comprises 420 residues: Glucose-1-phosphate adenylyltransferase (420 aa).

Alpha-D-glucose 1-phosphate contacts are provided by residues tyrosine 107, glycine 172, 187-188 (EK), and serine 205.

Belongs to the bacterial/plant glucose-1-phosphate adenylyltransferase family. As to quaternary structure, homotetramer.

It carries out the reaction alpha-D-glucose 1-phosphate + ATP + H(+) = ADP-alpha-D-glucose + diphosphate. It functions in the pathway glycan biosynthesis; glycogen biosynthesis. In terms of biological role, involved in the biosynthesis of ADP-glucose, a building block required for the elongation reactions to produce glycogen. Catalyzes the reaction between ATP and alpha-D-glucose 1-phosphate (G1P) to produce pyrophosphate and ADP-Glc. This Rhizobium leguminosarum bv. trifolii (strain WSM2304) protein is Glucose-1-phosphate adenylyltransferase.